The following is a 556-amino-acid chain: Urocanate hydratase (556 aa).

NAD(+) is bound by residues 53–54 (GG), Gln131, 177–179 (GMG), Glu197, 243–244 (NA), 264–268 (QTSAH), 274–275 (YL), and Tyr323. The active site involves Cys411. Gly493 lines the NAD(+) pocket.

It belongs to the urocanase family. The cofactor is NAD(+).

It is found in the cytoplasm. The enzyme catalyses 4-imidazolone-5-propanoate = trans-urocanate + H2O. It participates in amino-acid degradation; L-histidine degradation into L-glutamate; N-formimidoyl-L-glutamate from L-histidine: step 2/3. Functionally, catalyzes the conversion of urocanate to 4-imidazolone-5-propionate. This Pseudomonas fluorescens (strain SBW25) protein is Urocanate hydratase.